The sequence spans 282 residues: MTISGVLAGCPAPAKLNLFLHVVGRRDDGYHLLQTAFRLLDWGDRLDFRVRDDGLIRRTNQVAGVAEDDDLVVRAARRLQQATGTPLGADITLHKVLPMGGGVGGGSSDAATTLIALNHLWQTGLTRADLQQLGLALGADVPFFIYGRDAFAEGVGEAFQPLALPAAVYVVLSPEVSVPTAEIFSAKGLTRDTPPIRIADFAASPTRNDLQATACSRYPEVARAINWLEHYAPARMTGSGACVFAEVASEIEADEIVSLCPARWKAWKAKSLARHPLYGLLD.

Lys-15 is a catalytic residue. Pro-98–Ser-108 provides a ligand contact to ATP. Asp-140 is an active-site residue.

It belongs to the GHMP kinase family. IspE subfamily.

It catalyses the reaction 4-CDP-2-C-methyl-D-erythritol + ATP = 4-CDP-2-C-methyl-D-erythritol 2-phosphate + ADP + H(+). It functions in the pathway isoprenoid biosynthesis; isopentenyl diphosphate biosynthesis via DXP pathway; isopentenyl diphosphate from 1-deoxy-D-xylulose 5-phosphate: step 3/6. Catalyzes the phosphorylation of the position 2 hydroxy group of 4-diphosphocytidyl-2C-methyl-D-erythritol. In Azoarcus sp. (strain BH72), this protein is 4-diphosphocytidyl-2-C-methyl-D-erythritol kinase.